The following is a 380-amino-acid chain: Cytochrome b (380 aa).

4 helical membrane passes run 34–54 (FGSL…LLAM), 78–99 (WLIR…FLHI), 114–134 (WNTG…GYVL), and 179–199 (FFAL…THLM). Heme b is bound by residues histidine 84 and histidine 98. 2 residues coordinate heme b: histidine 183 and histidine 197. Histidine 202 contacts a ubiquinone. A run of 4 helical transmembrane segments spans residues 227 to 247 (LKDI…ALFS), 289 to 309 (LGGV…PFLH), 321 to 341 (LSQA…WVGS), and 348 to 368 (FIII…SLLP).

The protein belongs to the cytochrome b family. The cytochrome bc1 complex contains 11 subunits: 3 respiratory subunits (MT-CYB, CYC1 and UQCRFS1), 2 core proteins (UQCRC1 and UQCRC2) and 6 low-molecular weight proteins (UQCRH/QCR6, UQCRB/QCR7, UQCRQ/QCR8, UQCR10/QCR9, UQCR11/QCR10 and a cleavage product of UQCRFS1). This cytochrome bc1 complex then forms a dimer. It depends on heme b as a cofactor.

It localises to the mitochondrion inner membrane. In terms of biological role, component of the ubiquinol-cytochrome c reductase complex (complex III or cytochrome b-c1 complex) that is part of the mitochondrial respiratory chain. The b-c1 complex mediates electron transfer from ubiquinol to cytochrome c. Contributes to the generation of a proton gradient across the mitochondrial membrane that is then used for ATP synthesis. The polypeptide is Cytochrome b (MT-CYB) (Crossoptilon crossoptilon (White-eared pheasant)).